A 414-amino-acid chain; its full sequence is 3-oxo-isoapionate-4-phosphate transcarboxylase/hydrolase (414 aa).

Mg(2+)-binding residues include Lys180, Asp182, and Glu183. Position 180 is an N6-carboxylysine (Lys180).

It belongs to the RuBisCO large chain family. Mg(2+) is required as a cofactor.

It catalyses the reaction 3-oxoisoapionate 4-phosphate + H2O = (2R)-3-phosphoglycerate + glycolate + H(+). It participates in carbohydrate metabolism. In terms of biological role, involved in catabolism of D-apiose. Catalyzes the conversion of 3-oxo-isoapionate 4-phosphate to 3-phosphoglycerate and glycolate. This is 3-oxo-isoapionate-4-phosphate transcarboxylase/hydrolase from Xanthobacter autotrophicus (strain ATCC BAA-1158 / Py2).